A 306-amino-acid chain; its full sequence is C-type lectin domain family 10 member A (306 aa).

Residues 1–37 (MTMAYENFQNLGSEEKNQEAGKAPPQSFLCNILSWTH) lie on the Cytoplasmic side of the membrane. The helical; Signal-anchor for type II membrane protein transmembrane segment at 38–58 (LLLFSLGLSLLLLVVISVIGS) threads the bilayer. At 59 to 306 (QNSQLRRDLE…VCEMKLAKDS (248 aa)) the chain is on the extracellular side. 2 N-linked (GlcNAc...) asparagine glycosylation sites follow: asparagine 76 and asparagine 168. Residues 174–300 (CCPLHWMEHE…QRPYRWVCEM (127 aa)) form the C-type lectin domain. Disulfide bonds link cysteine 175-cysteine 186, cysteine 203-cysteine 298, and cysteine 276-cysteine 290.

As to quaternary structure, homooligomer.

The protein localises to the membrane. Its function is as follows. Recognizes terminal galactose and N-acetylgalactosamine units. The chain is C-type lectin domain family 10 member A (Clec10a) from Rattus norvegicus (Rat).